The following is a 295-amino-acid chain: Autophagy-related protein 37 (295 aa).

One can recognise an ACB domain in the interval 5–103 (VDRVFVHALN…LIDTMHRYAT (99 aa)). Disordered stretches follow at residues 124-162 (NSPS…PLKE) and 174-201 (LRSQ…RWQR). Over residues 125-153 (SPSSSLSSPRPNQSTGAGAQQPQQEPEQA) the composition is skewed to low complexity. N136 is a glycosylation site (N-linked (GlcNAc...) asparagine). Residues 244–264 (WLLVKHIFADLVILSVVLLWL) traverse the membrane as a helical segment.

Belongs to the ATG37 family.

The protein resides in the peroxisome membrane. Functionally, acyl-CoA binding protein which acts as the peroxisome receptor for pexophagy. Required for both micropexophagy and macropexophagy, but not for the cytoplasm to vacuole transport (Cvt) or autophagy pathways. Required for functional micropexophagic apparatus (MIPA) and relocation of ATG11 to the peroxisome-sequestering arms of the vacuole. Binds palmitoyl-CoA but not oleyl-CoA. The chain is Autophagy-related protein 37 from Gibberella zeae (strain ATCC MYA-4620 / CBS 123657 / FGSC 9075 / NRRL 31084 / PH-1) (Wheat head blight fungus).